The following is a 547-amino-acid chain: Cytochrome P450 monooxygenase oblB (547 aa).

Helical transmembrane passes span 42 to 62 (GAVG…RLFL) and 242 to 262 (FDMF…PWLI). The N-linked (GlcNAc...) asparagine glycan is linked to N277. The chain crosses the membrane as a helical span at residues 345–365 (VLIGSGTMTTAGTMGFLCYYI). A heme-binding site is contributed by C489.

This sequence belongs to the cytochrome P450 family. It depends on heme as a cofactor.

It localises to the membrane. It carries out the reaction ophiobolin F + 4 reduced [NADPH--hemoprotein reductase] + 4 O2 = ophiobolin C + 4 oxidized [NADPH--hemoprotein reductase] + 6 H2O + 4 H(+). The protein operates within secondary metabolite biosynthesis; terpenoid biosynthesis. Functionally, cytochrome P450 monooxygenase; part of the gene cluster that mediates the biosynthesis of the sesterterpenes ophiobolins, fungal phytotoxins with potential anti-cancer activities. The first step of the pathway is performed by the sesterterpene synthase oblA that possesses both prenyl transferase and terpene cyclase activity, converting isopentenyl diphosphate and dimethylallyl diphosphate into geranylfarnesyl diphosphate (GFPP) and further converting GFPP into ophiobolin F, respectively. Other sesterterpenoids (C(25) terpenoids) are found as minor products of oblA. The cytochrome P450 monooxygenase oblB then catalyzes a four-step oxidative transformation of ophiobolin F to yield ophiobolin C. The function of the cytochrome P450 monooxygenase oblE has still to be determined. The sequence is that of Cytochrome P450 monooxygenase oblB from Emericella variicolor (Aspergillus stellatus).